The chain runs to 78 residues: Short neurotoxin SNTX11 (78 aa).

An N-terminal signal peptide occupies residues 1 to 21 (MKTLLLTFLVVTIVCLDLGYT). Intrachain disulfides connect Cys-24/Cys-40, Cys-33/Cys-58, Cys-62/Cys-70, and Cys-71/Cys-76.

Belongs to the three-finger toxin family. Short-chain subfamily. In terms of tissue distribution, expressed by the venom gland.

The protein resides in the secreted. Its function is as follows. This three-finger toxin binds and inhibits the nicotinic acetylcholine receptor (nAChR). This Ophiophagus hannah (King cobra) protein is Short neurotoxin SNTX11.